The following is a 388-amino-acid chain: Processive diacylglycerol beta-glucosyltransferase (388 aa).

It belongs to the glycosyltransferase 28 family. UgtP subfamily.

Its subcellular location is the cell membrane. It catalyses the reaction a 1,2-diacyl-3-O-(beta-D-glucopyranosyl)-sn-glycerol + UDP-alpha-D-glucose = a 1,2-diacyl-3-O-(beta-D-Glc-(1-&gt;6)-beta-D-Glc)-sn-glycerol + UDP + H(+). The enzyme catalyses a 1,2-diacyl-3-O-(beta-D-Glc-(1-&gt;6)-beta-D-Glc)-sn-glycerol + UDP-alpha-D-glucose = a 1,2-diacyl-3-O-(beta-D-Glc-(1-&gt;6)-beta-D-Glc-(1-&gt;6)-beta-D-Glc)-sn-glycerol + UDP + H(+). The catalysed reaction is a 1,2-diacyl-sn-glycerol + UDP-alpha-D-glucose = a 1,2-diacyl-3-O-(beta-D-glucopyranosyl)-sn-glycerol + UDP + H(+). The protein operates within glycolipid metabolism; diglucosyl-diacylglycerol biosynthesis. Functionally, processive glucosyltransferase involved in the biosynthesis of both the bilayer- and non-bilayer-forming membrane glucolipids. Is able to successively transfer up to three glucosyl residues to diacylglycerol (DAG), thereby catalyzing the formation of beta-monoglucosyl-DAG (3-O-(beta-D-glucopyranosyl)-1,2-diacyl-sn-glycerol), beta-diglucosyl-DAG (3-O-(beta-D-glucopyranosyl-beta-(1-&gt;6)-D-glucopyranosyl)-1,2-diacyl-sn-glycerol) and beta-triglucosyl-DAG (3-O-(beta-D-glucopyranosyl-beta-(1-&gt;6)-D-glucopyranosyl-beta-(1-&gt;6)-D-glucopyranosyl)-1,2-diacyl-sn-glycerol). Beta-diglucosyl-DAG is the predominant glycolipid found in Bacillales and is also used as a membrane anchor for lipoteichoic acid (LTA). This chain is Processive diacylglycerol beta-glucosyltransferase, found in Bacillus cereus (strain ATCC 14579 / DSM 31 / CCUG 7414 / JCM 2152 / NBRC 15305 / NCIMB 9373 / NCTC 2599 / NRRL B-3711).